Here is a 491-residue protein sequence, read N- to C-terminus: Cytochrome P450 2H2 (491 aa).

Position 436 (Cys-436) interacts with heme.

It belongs to the cytochrome P450 family. It depends on heme as a cofactor.

The protein localises to the endoplasmic reticulum membrane. It is found in the microsome membrane. The catalysed reaction is an organic molecule + reduced [NADPH--hemoprotein reductase] + O2 = an alcohol + oxidized [NADPH--hemoprotein reductase] + H2O + H(+). Its function is as follows. Cytochromes P450 are a group of heme-thiolate monooxygenases. In liver microsomes, this enzyme is involved in an NADPH-dependent electron transport pathway. It oxidizes a variety of structurally unrelated compounds, including steroids, fatty acids, and xenobiotics. The polypeptide is Cytochrome P450 2H2 (CYP2H2) (Gallus gallus (Chicken)).